Reading from the N-terminus, the 119-residue chain is Beta-2-microglobulin (119 aa).

An N-terminal signal peptide occupies residues 1-20 (MACFVVVALLVLLSLSGLEA). The Ig-like C1-type domain occupies 25–114 (PKIQVYSRHP…VTFSTPKTVK (90 aa)). C45 and C100 are joined by a disulfide.

It belongs to the beta-2-microglobulin family. In terms of assembly, heterodimer of an alpha chain and a beta chain. Beta-2-microglobulin is the beta-chain of major histocompatibility complex class I molecules.

The protein resides in the secreted. Its function is as follows. Component of the class I major histocompatibility complex (MHC). Involved in the presentation of peptide antigens to the immune system. In Leontopithecus chrysopygus (Golden-rumped lion tamarin), this protein is Beta-2-microglobulin (B2M).